Reading from the N-terminus, the 207-residue chain is Small ribosomal subunit protein uS4 (207 aa).

An S4 RNA-binding domain is found at 96 to 156 (RRLDNVVYRL…EKFKTSSFIA (61 aa)).

Belongs to the universal ribosomal protein uS4 family. In terms of assembly, part of the 30S ribosomal subunit. Contacts protein S5. The interaction surface between S4 and S5 is involved in control of translational fidelity.

In terms of biological role, one of the primary rRNA binding proteins, it binds directly to 16S rRNA where it nucleates assembly of the body of the 30S subunit. Its function is as follows. With S5 and S12 plays an important role in translational accuracy. The chain is Small ribosomal subunit protein uS4 from Leptospira interrogans serogroup Icterohaemorrhagiae serovar copenhageni (strain Fiocruz L1-130).